Consider the following 341-residue polypeptide: S-adenosylmethionine:tRNA ribosyltransferase-isomerase (341 aa).

It belongs to the QueA family. As to quaternary structure, monomer.

Its subcellular location is the cytoplasm. It catalyses the reaction 7-aminomethyl-7-carbaguanosine(34) in tRNA + S-adenosyl-L-methionine = epoxyqueuosine(34) in tRNA + adenine + L-methionine + 2 H(+). The protein operates within tRNA modification; tRNA-queuosine biosynthesis. In terms of biological role, transfers and isomerizes the ribose moiety from AdoMet to the 7-aminomethyl group of 7-deazaguanine (preQ1-tRNA) to give epoxyqueuosine (oQ-tRNA). This Desulforamulus reducens (strain ATCC BAA-1160 / DSM 100696 / MI-1) (Desulfotomaculum reducens) protein is S-adenosylmethionine:tRNA ribosyltransferase-isomerase.